The primary structure comprises 421 residues: UPF0229 protein lpp2857 (421 aa).

Residues 83–110 form a disordered region; the sequence is IAGDRIKRPSGGGAGGAGGNASDSGEGE. Over residues 92–101 the composition is skewed to gly residues; the sequence is SGGGAGGAGG.

It belongs to the UPF0229 family.

In Legionella pneumophila (strain Paris), this protein is UPF0229 protein lpp2857.